Here is a 3068-residue protein sequence, read N- to C-terminus: MLQKSYHGVVSQASYDNTCGRGSQIRRDRSRAGVRFNTEYNPVLLTVSKQIAQDGEGYHCRANLINKITTKQQLAFISELQPTQSTLKVLPVADGRKMPIEPIAIVGASCRLPGSSNSLDSLWELLADGGEAWSSVPADRFNEAAFHHPNASDPNGTNNHQGGHFIDGDIRDFDHAFFHLSPQHAAAMDPQQRILLELVYEAFESAGWAREACAGSRTAVFAAIFGTDYDRNLCKDLLDLPVYHSVGTGIAILANRISHAFDLRGPSLTLDTGCSGGLVALHEACQSLRNGESDAALVAAANLQLMPDHYIGMSSQHMVSSTGRCYPFDLRGDGYGRGEGFAVVALKRLSDALRDQDPIRSVILNSGINQDGYTASGITHPNRVAQADLIRDTYDRVHLHPQDTVYVEAHGTGTVAGDNEELAAIAEVFAGPDRSLPLHVGSNKGSIGHTESTSGLASLLKVILMLDHQVIPPVAGFTNPKPGLPLDRIKIPTQRLPWPLTEGMVPRISINSFGYGGTNAHAIMERGPRTYDASCNTTPTYSPRLFVLSANNKGSLRSLLESYVNWIQKHPNIPLADISYTLCHRRSALPWRFSCVADSESSLLDTLERGVKLISTRPPPSKRQVIYVFTGQGAQWAGMGHELLLETTPSSVFRDSIRTSRDILYELGATWDLEAELLGQDGGGRINKAELAQPATTAVQIGIVMLLRSQGVRPWAVVGHSSGEIAAAYAAGRLSHRMALRVAFHRGFMAGVSKDRGLPPGAMLSIGLGQGDAAPYLHDLTHGEAVIACINSPNSVTVSGDAAAVDEVMARIIARGDGTFCRKLHVDTAYHSHHMRAVADEYCIRLGDLDLGIDERISAPGGQRDKEEVKYFSSNSGLAWVSGFAASYWVDNLISPVRFSDAIQTVAREHHKHNGGLALFVEIGPHAALAGPIRQCLAASNVPKLEYNYLSALKRGAGAVETMLQVVGHLFERGVRVNFDEISALTPGFHTAAVRPDLPSYCWDYSSKHWHESRLSREYRMRREPYHHLLGVRMTELASTEPRWRHMVGLATLPWLAHHIIDGLIIFPGACYVCMVIEAVRQLAKEQYSDQALEAVSLRDVSFLRALVVPDAPSRVEMQLSLKHRADASPLGFTFSVTALSDGKWHVFCTGVVEGVMTLDKPETEPVMLDPRPKQDWLNRTMVIPEELYNEMTADGNTYGPSFRGLSSLTMSTDGSMATAVIEVPDIAASMPAQYQASHILHPTTLDSMFHVGIPMMKRRHGAGSVMPVHIGELLISTQTPALNSQGSKLDVSAKLTSSHFRASNIDMTIVSGGFPVMYASAIESRSLAAHVDGAHGTQDEHGICYELAWRCDLNFLRTSDLTRSSILADLVSFLCFKTAHLSIAELGESPGVLAPAFLAAVGVHRGTVTSYDVVERGNQPIDEGCKRLTGYPIRRRALDPDSSLESQGFAPNTYDVVLASDLGSLCYVSTLVKNDGVVVVVLKPGSDDNWQSTLRKTWPSHDIQLTVVDSVNGNRIILARNDKTKDSHSSSRVHILTHSALQTTPSWATALIGKLHEMGYEMSSGSLSQDVIQRSSDARNTCIMVIDDLAQPILSDRACFNSAITLLRQEHRIIWLSLDSPSSMHQITGVARTAHAENDNLRLTVVHAALEAIGSPPLVDLLCHCLTYAQNRDSLAPYEREYRVSRDAAVLIPRLRSSDCLNRAIRASEKASEPSSNIETEPHHYINTTRSLALGPVQSSKGDGDIVFIDSHTVELAEGQVEVETEAFVLSKSQNLTSSQLGEYSGIVRRVGKGVRDFSPGDAVVALALDGVVGANHARVPSSHVSRRPDSLSPAVAAALFLPTIAASYAIHHLAQISKGKSIVLIHGVLTDIGRASVAVARVLGATITATAISRQEALEITQQLNIQLENIIVSRPSLLRPQLDELFQLDAIIHISKDSVPVAAWSCLKPFGQVVVFNSSSSIAFPSPPPENATIHYCHITNLVQAQPDRLADLVSLAAPALERIPFKGIDLCIQDVAQVPEAIRLVRQGGKVILQASPSSLVRTVIPSSISMDWEAVDAAYVVAGGMGDLGRRLLLLMARRGAMHLVTLSRRSIEPEDHRSFQGQLQLVQPGCRLYCLVCDITSESSVQNAADTLTRTGVPPVRGVIQSAVTLHDRTLETMTFDDFFAVAHAKVDGTLVLERVFASPHLHFFLMLSSAVNITGASGQANYNAGNAVQDAIAHDRGPGFLSMNIGWIEDAINTSNNKTILQGLWRTGLRPILGQELSRYFDHLLGAASSHSRMRQAIIGFNAASLSHTSASNSNVHSAMFCHIRGSLAAEESSSSTNNVRSFGEVVEGGDLDTIIDFISSAITRRLMTLISMDDDQIKDRNGSILDLGLDSLVAIELRNWITREFKSPLQSSEILTDQPIRDLAEKVASRSSLLASGLDKEVPAGSLENGDVEDRHSAGAIRPSTSAHSTVKYVSENLPPLPLPPLADTLRLFEDSRRAIDTANHRRNTSDAVHDFLKGPGPRLYNSLQETNSDVIADAYDRQVYLERREPLPEQGPFIFIHSIQAPVHSQARRAAILTIAAFDFIRLLARGDIATDTLHGEPITTEGRNWLFYATRRPGIGIDRMERHVPNNTVAVLRRGHVFQLRLPDVEQALDMLAVTRVYDDILAASCDAIPPICTLTADERDSWALFRLDLERHPQNAAVLACIDTAAFVMCLDDESPTSSGERYTQFMINGAHRPFANRWLDKTLQFAVTANGISAEIYEHSKLDGIDTNRLHAHIARAILAHPPSETADISSFSSPYAVQELMWEPSSATLQRIEHVRTQCQVYGPLDHQVFDVASLGLRSLRGFRLQPNATAHLTVLLALYLVDGEIRPAWEKVSLGTFARGRVEWVQTISPAARAFIEAAAASYTDSNNRTRVRALLHQATSTHSRSLVAAGRGLGAVRALYALRGAAQEQEKELPELFRTHSWDATRRGGPGQDVKLGFMRLAPDDDANGNVGATPGDDDINGRWDEAGFLVCGERGVYVHCNVWEKHARFAASGRPAYVTKLCKAMRRASCMITSLLEDPSKRPT.

In terms of domain architecture, Ketosynthase family 3 (KS3) spans Ile-100–Arg-526. Active-site for beta-ketoacyl synthase activity residues include Cys-274, His-410, and His-449. Positions Tyr-627–Ala-938 are malonyl-CoA:ACP transacylase (MAT) domain. Residue Ser-721 is the For malonyltransferase activity of the active site. Residues His-1027–Asp-1160 form an N-terminal hotdog fold region. The dehydratase (DH) domain stretch occupies residues His-1027–Val-1311. In terms of domain architecture, PKS/mFAS DH spans His-1027–Gly-1334. The active-site Proton acceptor; for dehydratase activity is His-1059. The segment at Asn-1179 to Gly-1334 is C-terminal hotdog fold. Asp-1247 serves as the catalytic Proton donor; for dehydratase activity. The interval Leu-1735–Leu-2037 is enoylreductase (ER) domain. Residues Ala-2062–Glu-2240 form a catalytic ketoreductase (KR) domain region. The 79-residue stretch at Thr-2345–Ser-2423 folds into the Carrier domain. Ser-2383 is subject to O-(pantetheine 4'-phosphoryl)serine. Residues Phe-2831–Asp-3062 form a choline/carnitine acyltransferase (cAT) domain region.

The protein operates within secondary metabolite biosynthesis. Functionally, highly reducing polyketide synthase; part of the gene cluster that mediates the biosynthesis of (2Z,4E,6E,10E)-9-hydroxydodeca-2,4,6,10-tetraenoic acid (BAA), (2E,4E,6E,10E)-9-hydroxydodeca-2,4,6,10-tetraenoic acid (BAB), and (2Z,4E,6E)-octa-2,4,6-trienedioic acid (PBA). The highly reducing polyketide synthase Ba17a is sufficent to produce PBA and BAA. The still to be characterized protein Ba17b leads to an increased production of BAA as well as to the production of the new compound BAB. BAA does not possess insecticidal activity against G.mellonella larvae, however, both BAA and BAB increase the growth of Candida albicans and BAA can mitigate the fungicidal effects of fluconazole over C.albicans, suggesting that generalist pathogens such as M.anisopliae, can potentially manipulate the yeast microbiota found in arthropods (and anywhere else) by the activity of compounds as BAA and BAB. In Metarhizium anisopliae (Entomophthora anisopliae), this protein is Highly reducing polyketide synthase 17.